A 212-amino-acid chain; its full sequence is Large ribosomal subunit protein uL3 (212 aa).

Residues threonine 117–arginine 142 are disordered.

This sequence belongs to the universal ribosomal protein uL3 family. Part of the 50S ribosomal subunit. Forms a cluster with proteins L14 and L19.

Its function is as follows. One of the primary rRNA binding proteins, it binds directly near the 3'-end of the 23S rRNA, where it nucleates assembly of the 50S subunit. This is Large ribosomal subunit protein uL3 from Acholeplasma laidlawii (strain PG-8A).